The primary structure comprises 352 residues: Chorismate synthase (352 aa).

Arg48 contributes to the NADP(+) binding site. FMN is bound by residues 125 to 127 (RSS), 238 to 239 (NA), Gly278, 293 to 297 (KPTSS), and Arg319.

Belongs to the chorismate synthase family. As to quaternary structure, homotetramer. It depends on FMNH2 as a cofactor.

It catalyses the reaction 5-O-(1-carboxyvinyl)-3-phosphoshikimate = chorismate + phosphate. Its pathway is metabolic intermediate biosynthesis; chorismate biosynthesis; chorismate from D-erythrose 4-phosphate and phosphoenolpyruvate: step 7/7. Functionally, catalyzes the anti-1,4-elimination of the C-3 phosphate and the C-6 proR hydrogen from 5-enolpyruvylshikimate-3-phosphate (EPSP) to yield chorismate, which is the branch point compound that serves as the starting substrate for the three terminal pathways of aromatic amino acid biosynthesis. This reaction introduces a second double bond into the aromatic ring system. The sequence is that of Chorismate synthase from Legionella pneumophila (strain Lens).